The sequence spans 889 residues: Cytoplasmic aconitate hydratase (889 aa).

Substrate is bound by residues glutamine 86 and 205 to 207; that span reads DSH. Residues cysteine 437, cysteine 503, and cysteine 506 each contribute to the [4Fe-4S] cluster site. Substrate is bound by residues arginine 536, arginine 541, arginine 699, and 779 to 780; that span reads SR.

The protein belongs to the aconitase/IPM isomerase family. In terms of assembly, interacts (when associated with the 4Fe-4S) with FBXL5. Interacts with frataxin(81-210). [4Fe-4S] cluster is required as a cofactor.

The protein localises to the cytoplasm. The protein resides in the cytosol. It catalyses the reaction citrate = D-threo-isocitrate. Functionally, bifunctional iron sensor that switches between 2 activities depending on iron availability. Iron deprivation, promotes its mRNA binding activity through which it regulates the expression of genes involved in iron uptake, sequestration and utilization. Binds to iron-responsive elements (IRES) in the untranslated region of target mRNAs preventing for instance the translation of ferritin and aminolevulinic acid synthase and stabilizing the transferrin receptor mRNA. Its function is as follows. Conversely, when cellular iron levels are high, binds a 4Fe-4S cluster which precludes RNA binding activity and promotes the aconitase activity, the isomerization of citrate to isocitrate via cis-aconitate. The sequence is that of Cytoplasmic aconitate hydratase (ACO1) from Oryctolagus cuniculus (Rabbit).